The primary structure comprises 354 residues: 3-dehydroquinate synthase (354 aa).

Residues 100–104, 124–125, K136, K145, and 163–166 each bind NAD(+); these read GATGD, TT, and FLKT. The Zn(2+) site is built by E178, H242, and H256.

It belongs to the sugar phosphate cyclases superfamily. Dehydroquinate synthase family. Requires NAD(+) as cofactor. Co(2+) is required as a cofactor. It depends on Zn(2+) as a cofactor.

The protein resides in the cytoplasm. The enzyme catalyses 7-phospho-2-dehydro-3-deoxy-D-arabino-heptonate = 3-dehydroquinate + phosphate. It participates in metabolic intermediate biosynthesis; chorismate biosynthesis; chorismate from D-erythrose 4-phosphate and phosphoenolpyruvate: step 2/7. Functionally, catalyzes the conversion of 3-deoxy-D-arabino-heptulosonate 7-phosphate (DAHP) to dehydroquinate (DHQ). The chain is 3-dehydroquinate synthase from Staphylococcus aureus (strain Mu50 / ATCC 700699).